Reading from the N-terminus, the 411-residue chain is MTHWFHRNPLKATAPVSFNYYGVVTGPSASKICNDLRSSRARLLELFTDLSCNPEMMKNAADSYFSLLQGFINSLDESTQESKLRYIQNFKWTDTLQGQVPSAQQDAVFELISMGFNVALWYTKYASRLAGKENITEDEAKEVHRSLKIAAGIFKHLKESHLPKLITPAEKGRDLESRLIEAYVIQCQAEAQEVTIARAIELKHAPGLIAALAYETANFYQKADHTLSSLEPAYSAKWRKYLHLKMCFYTAYAYCYHGETLLASDKCGEAIRSLQEAEKLYAKAEALCKEYGETKGPGPTVKPSGHLFFRKLGNLVKNTLEKCQRENGFIYFQKIPTEAPQLELKANYGLVEPIPFEFPPTSVQWTPETLAAFDLTKRPKDDSTKPKPEEEVKPVKEPDIKPQKDTGCYIS.

The 319-residue stretch at 90 to 408 (FKWTDTLQGQ…DIKPQKDTGC (319 aa)) folds into the BRO1 domain. N6-acetyllysine is present on Lys-283. The tract at residues 372 to 411 (AFDLTKRPKDDSTKPKPEEEVKPVKEPDIKPQKDTGCYIS) is disordered. The segment covering 375-404 (LTKRPKDDSTKPKPEEEVKPVKEPDIKPQK) has biased composition (basic and acidic residues). Cys-408 is modified (cysteine methyl ester). The S-farnesyl cysteine moiety is linked to residue Cys-408. A propeptide spans 409–411 (YIS) (removed in mature form).

This sequence belongs to the BROX family. Monomer. Interacts with CHMP4B. Interacts with CHMP5: this interaction allows the recruitment of BROX to cellular membranes. Interacts with SYN2; this interaction promotes SYN2 ubiquitination and facilitates the relaxation of mechanical stress imposed by compressive actin fibers at the rupture site. Post-translationally, farnesylation is required for nuclear envelope localization.

The protein resides in the nucleus membrane. Functionally, nuclear envelope-associated factor that is involved in the nuclear envelope ruptures during interphase (NERDI) repair, where it is locally recruited by CHMP5 and reduces cytoskeletal stress through its action on SYN2 to help reseal the ruptured membrane. The protein is BRO1 domain-containing protein BROX of Homo sapiens (Human).